A 269-amino-acid polypeptide reads, in one-letter code: 4-hydroxy-tetrahydrodipicolinate reductase (269 aa).

Residues 11–16 and E37 contribute to the NAD(+) site; that span reads GASGRM. Residue R38 coordinates NADP(+). Residues 101 to 103 and 125 to 128 contribute to the NAD(+) site; these read GTT and AGNM. Residue H158 is the Proton donor/acceptor of the active site. H159 is a binding site for (S)-2,3,4,5-tetrahydrodipicolinate. K162 acts as the Proton donor in catalysis. 168-169 lines the (S)-2,3,4,5-tetrahydrodipicolinate pocket; it reads GT.

The protein belongs to the DapB family.

The protein resides in the cytoplasm. It carries out the reaction (S)-2,3,4,5-tetrahydrodipicolinate + NAD(+) + H2O = (2S,4S)-4-hydroxy-2,3,4,5-tetrahydrodipicolinate + NADH + H(+). The catalysed reaction is (S)-2,3,4,5-tetrahydrodipicolinate + NADP(+) + H2O = (2S,4S)-4-hydroxy-2,3,4,5-tetrahydrodipicolinate + NADPH + H(+). It functions in the pathway amino-acid biosynthesis; L-lysine biosynthesis via DAP pathway; (S)-tetrahydrodipicolinate from L-aspartate: step 4/4. Catalyzes the conversion of 4-hydroxy-tetrahydrodipicolinate (HTPA) to tetrahydrodipicolinate. The chain is 4-hydroxy-tetrahydrodipicolinate reductase from Cereibacter sphaeroides (strain ATCC 17023 / DSM 158 / JCM 6121 / CCUG 31486 / LMG 2827 / NBRC 12203 / NCIMB 8253 / ATH 2.4.1.) (Rhodobacter sphaeroides).